Consider the following 271-residue polypeptide: Catechol O-methyltransferase (271 aa).

The Cytoplasmic portion of the chain corresponds to 1–6 (MPEAPP). Residues 7 to 26 (LLLAAVLLGLVLLVVLLLLL) traverse the membrane as a helical; Signal-anchor for type II membrane protein segment. Topologically, residues 27–271 (RHWGWGLCLI…YKGPGSEAGP (245 aa)) are extracellular. S-adenosyl-L-methionine-binding positions include V92, E114, S122, E140, I141, 167–170 (GASQ), S169, and D191. D191 contributes to the Mg(2+) binding site. Residue K194 participates in substrate binding. Positions 219 and 220 each coordinate Mg(2+). Positions 220 and 249 each coordinate substrate. S267 carries the phosphoserine modification.

The protein belongs to the class I-like SAM-binding methyltransferase superfamily. Cation-dependent O-methyltransferase family. It depends on Mg(2+) as a cofactor. The N-terminus is blocked. As to expression, brain, liver, placenta, lymphocytes and erythrocytes.

It localises to the cytoplasm. The protein resides in the cell membrane. The enzyme catalyses a catechol + S-adenosyl-L-methionine = a guaiacol + S-adenosyl-L-homocysteine + H(+). The catalysed reaction is 2-hydroxyestrone + S-adenosyl-L-methionine = 2-hydroxy-3-methoxy-estrone + S-adenosyl-L-homocysteine + H(+). It catalyses the reaction 4-hydroxyestrone + S-adenosyl-L-methionine = 4-methoxyestrone + S-adenosyl-L-homocysteine + H(+). It carries out the reaction 2-hydroxyestrone + S-adenosyl-L-methionine = 2-methoxyestrone + S-adenosyl-L-homocysteine + H(+). The enzyme catalyses 4-hydroxy-17beta-estradiol + S-adenosyl-L-methionine = 4-methoxy-17beta-estradiol + S-adenosyl-L-homocysteine + H(+). The catalysed reaction is 2-hydroxy-17beta-estradiol + S-adenosyl-L-methionine = 2-hydroxy-3-methoxy-17beta-estradiol + S-adenosyl-L-homocysteine + H(+). It catalyses the reaction 2-hydroxy-17beta-estradiol + S-adenosyl-L-methionine = 2-methoxy-17beta-estradiol + S-adenosyl-L-homocysteine + H(+). Its function is as follows. Catalyzes the O-methylation, and thereby the inactivation, of catecholamine neurotransmitters and catechol hormones. Also shortens the biological half-lives of certain neuroactive drugs, like L-DOPA, alpha-methyl DOPA and isoproterenol. In Homo sapiens (Human), this protein is Catechol O-methyltransferase.